Here is a 173-residue protein sequence, read N- to C-terminus: Gonadotropin inhibitory hormone peptides (173 aa).

A signal peptide spans 1–26 (MEIISTQKFILLTLATVAFLTPHGAC). Residues 27 to 82 (LDELMKSSLESREDDDDKYYETKDSILEEKQRSLNFEEMKDWGSKNFMKVNTPTVN) constitute a propeptide that is removed on maturation. Phe-95 is subject to Phenylalanine amide. Positions 98-103 (SNPEER) are excised as a propeptide. Residue Phe-115 is modified to Phenylalanine amide. Residues 118-140 (AFGESLSRRAPNLSNRSGRSPLA) constitute a propeptide that is removed on maturation. Position 154 is a phenylalanine amide (Phe-154). Positions 157–173 (SVPISLSQGVQESEPGM) are excised as a propeptide.

This sequence belongs to the FARP (FMRFamide related peptide) family. Specifically expressed in the diencephalon.

The protein localises to the secreted. Hypothalamic factor, responsible for the negative regulation of gonadotropin secretion. This chain is Gonadotropin inhibitory hormone peptides (GNIH), found in Coturnix japonica (Japanese quail).